The chain runs to 163 residues: Large ribosomal subunit protein eL24y (163 aa).

Residues isoleucine 119–phenylalanine 133 are compositionally biased toward basic and acidic residues. A disordered region spans residues isoleucine 119 to arginine 163.

This sequence belongs to the eukaryotic ribosomal protein eL24 family. In terms of assembly, interacts with REIL1 and REIL2. Component of the large ribosomal subunit. Ubiquitous.

The protein resides in the cytoplasm. The protein localises to the nucleus. It localises to the nucleolus. Its subcellular location is the nucleoplasm. Might have an extraribosomal function in reinitiation of translation of ETTIN and MONOPTEROS genes that are involved in the auxin-mediated gynoecium patterning. Essential in leaf polarity establishment, probably having a role for translation in leaf dorsoventral patterning to specify leaf adaxial identity. The polypeptide is Large ribosomal subunit protein eL24y (Arabidopsis thaliana (Mouse-ear cress)).